Reading from the N-terminus, the 287-residue chain is 23S rRNA (uridine(2479)-2'-O)-methyltransferase (287 aa).

S-adenosyl-L-methionine contacts are provided by residues 210–211 (TD), glycine 232, and 252–254 (IPM).

This sequence belongs to the class IV-like SAM-binding methyltransferase superfamily. RNA methyltransferase TsnR/AvirB family. As to quaternary structure, homodimer.

The catalysed reaction is uridine(2479) in 23S rRNA + S-adenosyl-L-methionine = 2'-O-methyluridine(2479) in 23S rRNA + S-adenosyl-L-homocysteine + H(+). Specifically methylates the 2'-O-ribose position of uridine-2479 in 23S ribosomal RNA. Confers resistance to antibiotic avilamycin, an orthosomycin antibiotic. The chain is 23S rRNA (uridine(2479)-2'-O)-methyltransferase (aviRb) from Streptomyces viridochromogenes.